The sequence spans 171 residues: Co-chaperone protein HscB (171 aa).

Residues 2 to 74 form the J domain; the sequence is DYFTLFGLPA…LTRAEYLLSL (73 aa).

Belongs to the HscB family. As to quaternary structure, interacts with HscA and stimulates its ATPase activity. Interacts with IscU.

Co-chaperone involved in the maturation of iron-sulfur cluster-containing proteins. Seems to help targeting proteins to be folded toward HscA. The protein is Co-chaperone protein HscB of Salmonella choleraesuis (strain SC-B67).